The sequence spans 555 residues: 2-succinyl-5-enolpyruvyl-6-hydroxy-3-cyclohexene-1-carboxylate synthase (555 aa).

Belongs to the TPP enzyme family. MenD subfamily. As to quaternary structure, homodimer. Mg(2+) serves as cofactor. It depends on Mn(2+) as a cofactor. The cofactor is thiamine diphosphate.

The enzyme catalyses isochorismate + 2-oxoglutarate + H(+) = 5-enolpyruvoyl-6-hydroxy-2-succinyl-cyclohex-3-ene-1-carboxylate + CO2. It participates in quinol/quinone metabolism; 1,4-dihydroxy-2-naphthoate biosynthesis; 1,4-dihydroxy-2-naphthoate from chorismate: step 2/7. It functions in the pathway quinol/quinone metabolism; menaquinone biosynthesis. Functionally, catalyzes the thiamine diphosphate-dependent decarboxylation of 2-oxoglutarate and the subsequent addition of the resulting succinic semialdehyde-thiamine pyrophosphate anion to isochorismate to yield 2-succinyl-5-enolpyruvyl-6-hydroxy-3-cyclohexene-1-carboxylate (SEPHCHC). The polypeptide is 2-succinyl-5-enolpyruvyl-6-hydroxy-3-cyclohexene-1-carboxylate synthase (Bacteroides thetaiotaomicron (strain ATCC 29148 / DSM 2079 / JCM 5827 / CCUG 10774 / NCTC 10582 / VPI-5482 / E50)).